A 63-amino-acid polypeptide reads, in one-letter code: Cecropin-B (63 aa).

The first 22 residues, 1-22, serve as a signal peptide directing secretion; that stretch reads MNFAKILSFVFALVLALSMTSA. Residues 23–26 constitute a propeptide, removed by a dipeptidylpeptidase; sequence APEP. Lys47 bears the 5-hydroxylysine; partial mark. An Isoleucine amide modification is found at Ile61.

This sequence belongs to the cecropin family. Lepidopteran-B differs from lepidopteran-A by its hydroxylated residue. Highest expression in fat body and hemocytes. Is also expressed in Malpighian tubules and to a much lesser extent in midgut. Not present in silk gland.

Its subcellular location is the secreted. Cecropins have lytic and antibacterial activity against several Gram-positive and Gram-negative bacteria. This is Cecropin-B (CECB1) from Bombyx mori (Silk moth).